Here is a 523-residue protein sequence, read N- to C-terminus: GMP synthase [glutamine-hydrolyzing] (523 aa).

The region spanning 8–205 (KILILDFGSQ…VENICGCARS (198 aa)) is the Glutamine amidotransferase type-1 domain. Cys-85 (nucleophile) is an active-site residue. Residues His-179 and Glu-181 contribute to the active site. The GMPS ATP-PPase domain occupies 206-398 (WTPENIIEDA…LGLPAEMLNR (193 aa)). ATP is bound at residue 233–239 (SGGVDSS).

In terms of assembly, homodimer.

It catalyses the reaction XMP + L-glutamine + ATP + H2O = GMP + L-glutamate + AMP + diphosphate + 2 H(+). It functions in the pathway purine metabolism; GMP biosynthesis; GMP from XMP (L-Gln route): step 1/1. Its function is as follows. Catalyzes the synthesis of GMP from XMP. The protein is GMP synthase [glutamine-hydrolyzing] of Haemophilus ducreyi (strain 35000HP / ATCC 700724).